Reading from the N-terminus, the 659-residue chain is UvrABC system protein B (659 aa).

Residues 25 to 412 form the Helicase ATP-binding domain; sequence QSIENGNRGQ…SEIVAEQIIR (388 aa). 38–45 contacts ATP; it reads GVTGSGKT. A Beta-hairpin motif is present at residues 91–114; it reads YYDYYQPEAYVPQTDTFIEKDASI. The region spanning 429 to 582 is the Helicase C-terminal domain; sequence QIDDLYGEIQ…QMEYNEEHNI (154 aa). Residues 622–657 form the UVR domain; it reads EKLIEQYEEEMKEAAKNLQFERAAELRDIIKDLKEN.

This sequence belongs to the UvrB family. As to quaternary structure, forms a heterotetramer with UvrA during the search for lesions. Interacts with UvrC in an incision complex.

The protein resides in the cytoplasm. Its function is as follows. The UvrABC repair system catalyzes the recognition and processing of DNA lesions. A damage recognition complex composed of 2 UvrA and 2 UvrB subunits scans DNA for abnormalities. Upon binding of the UvrA(2)B(2) complex to a putative damaged site, the DNA wraps around one UvrB monomer. DNA wrap is dependent on ATP binding by UvrB and probably causes local melting of the DNA helix, facilitating insertion of UvrB beta-hairpin between the DNA strands. Then UvrB probes one DNA strand for the presence of a lesion. If a lesion is found the UvrA subunits dissociate and the UvrB-DNA preincision complex is formed. This complex is subsequently bound by UvrC and the second UvrB is released. If no lesion is found, the DNA wraps around the other UvrB subunit that will check the other stand for damage. The sequence is that of UvrABC system protein B from Clostridium perfringens (strain 13 / Type A).